The primary structure comprises 382 residues: S-adenosylmethionine synthase (382 aa).

H16 is an ATP binding site. D18 provides a ligand contact to Mg(2+). Residue E44 coordinates K(+). L-methionine is bound by residues E57 and Q100. The tract at residues 100–110 is flexible loop; it reads QSADIAMGVDE. Residues 165–167, D240, 246–247, A263, and K267 each bind ATP; these read DAK and RK. D240 is an L-methionine binding site. Residue K271 participates in L-methionine binding.

It belongs to the AdoMet synthase family. Homotetramer; dimer of dimers. Requires Mg(2+) as cofactor. The cofactor is K(+).

The protein resides in the cytoplasm. It carries out the reaction L-methionine + ATP + H2O = S-adenosyl-L-methionine + phosphate + diphosphate. Its pathway is amino-acid biosynthesis; S-adenosyl-L-methionine biosynthesis; S-adenosyl-L-methionine from L-methionine: step 1/1. Its function is as follows. Catalyzes the formation of S-adenosylmethionine (AdoMet) from methionine and ATP. The overall synthetic reaction is composed of two sequential steps, AdoMet formation and the subsequent tripolyphosphate hydrolysis which occurs prior to release of AdoMet from the enzyme. The chain is S-adenosylmethionine synthase from Saccharophagus degradans (strain 2-40 / ATCC 43961 / DSM 17024).